We begin with the raw amino-acid sequence, 548 residues long: Organic cation transporter protein (548 aa).

At 1–22 the chain is on the cytoplasmic side; that stretch reads MGYDDVITHLGEFGPYQKRIYY. A helical transmembrane segment spans residues 23–43; sequence LLCLPAIVCAFHKLAGVFLLA. Residues 44–127 lie on the Extracellular side of the membrane; sequence KPDFRCALPY…TEWNLVCSRS (84 aa). Asparagine 55, asparagine 67, asparagine 89, and asparagine 97 each carry an N-linked (GlcNAc...) asparagine glycan. The chain crosses the membrane as a helical span at residues 128–148; the sequence is LLSATSDSLFMLGVLLGSLIF. Residues 149–158 are Cytoplasmic-facing; it reads GQMSDKLGRK. A helical membrane pass occupies residues 159–179; the sequence is PTFFASLVLQLIFGVLAAVAP. Over 180–189 the chain is Extracellular; sequence EYFSYTISRM. The chain crosses the membrane as a helical span at residues 190 to 210; the sequence is IVGATTSGVFLVAYVIALEMV. The Cytoplasmic segment spans residues 211–219; the sequence is GSSYRLFAG. The helical transmembrane segment at 220 to 240 threads the bilayer; that stretch reads VAMQMFFSVGFMLTAGFAYFI. Residues 241 to 244 lie on the Extracellular side of the membrane; sequence HDWR. The helical transmembrane segment at 245–265 threads the bilayer; sequence WLQIAITLPGLLFLCYYWIIP. Over 266–337 the chain is Cytoplasmic; the sequence is ESARWLLMKG…LLRYPNLRRK (72 aa). A helical transmembrane segment spans residues 338 to 358; sequence TLLIFFDWFVNSGVYYGLSWN. Topologically, residues 359 to 366 are extracellular; that stretch reads TNNLGGNQ. Residues 367–387 form a helical membrane-spanning segment; that stretch reads LVNFMISGAVEIPGYTLLLFT. Over 388–395 the chain is Cytoplasmic; that stretch reads LNRWGRRS. Residues 396-416 traverse the membrane as a helical segment; that stretch reads ILCGTMMVAGISLLATIFVPS. Residues 417–419 lie on the Extracellular side of the membrane; sequence DMN. A helical transmembrane segment spans residues 420-440; it reads WLIVACAMIGKLAITSSYGTI. Residues 441–453 are Cytoplasmic-facing; sequence YIFSAEQFPTVVR. The chain crosses the membrane as a helical span at residues 454 to 474; the sequence is NVGLGASSMVARVGGILAPYL. Residues 475-482 lie on the Extracellular side of the membrane; it reads KLLGEIWR. Residues 483–503 form a helical membrane-spanning segment; the sequence is PLPLIICGALSLTAGLLSLLL. Topologically, residues 504 to 548 are cytoplasmic; the sequence is PETLNKPMPETIEDGENFGKKPAPQETAEEGGTQELSGMLNGKSG. Residues 512 to 548 are disordered; that stretch reads PETIEDGENFGKKPAPQETAEEGGTQELSGMLNGKSG.

The protein belongs to the major facilitator (TC 2.A.1) superfamily. Organic cation transporter (TC 2.A.1.19) family. As to expression, expressed in embryos and adults at low level. Expressed at higher level in third instar larvae.

Its subcellular location is the membrane. In terms of biological role, probably transports organic cations. The chain is Organic cation transporter protein (Orct) from Drosophila melanogaster (Fruit fly).